A 51-amino-acid chain; its full sequence is MSNLIFNKMYFLFLIFYLKFYSLDLRRIFLCKILSKIIIESYTLFMYFCFK.

This is an uncharacterized protein from Borreliella burgdorferi (strain ATCC 35210 / DSM 4680 / CIP 102532 / B31) (Borrelia burgdorferi).